Reading from the N-terminus, the 308-residue chain is Limonin dehydrogenase (308 aa).

It belongs to the aldehyde dehydrogenase family.

The protein resides in the periplasm. With respect to regulation, completely inhibited by HgCl(2), CoCl(2) and CaCl(2). Functionally, catalyzes the NAD(+)-dependent conversion of limonin. This is Limonin dehydrogenase from Pseudomonas putida (Arthrobacter siderocapsulatus).